The chain runs to 349 residues: tRNA pseudouridine synthase D (349 aa).

Substrate is bound at residue phenylalanine 27. Catalysis depends on aspartate 80, which acts as the Nucleophile. Asparagine 129 contributes to the substrate binding site. The TRUD domain occupies 155–303; the sequence is GVPNYFGAQR…VEAARRAMLL (149 aa). A substrate-binding site is contributed by phenylalanine 329.

This sequence belongs to the pseudouridine synthase TruD family.

The catalysed reaction is uridine(13) in tRNA = pseudouridine(13) in tRNA. Functionally, responsible for synthesis of pseudouridine from uracil-13 in transfer RNAs. The chain is tRNA pseudouridine synthase D from Escherichia fergusonii (strain ATCC 35469 / DSM 13698 / CCUG 18766 / IAM 14443 / JCM 21226 / LMG 7866 / NBRC 102419 / NCTC 12128 / CDC 0568-73).